The primary structure comprises 219 residues: Protein-L-isoaspartate O-methyltransferase (219 aa).

The active site involves S65.

This sequence belongs to the methyltransferase superfamily. L-isoaspartyl/D-aspartyl protein methyltransferase family. As to quaternary structure, monomer.

Its subcellular location is the cytoplasm. It catalyses the reaction [protein]-L-isoaspartate + S-adenosyl-L-methionine = [protein]-L-isoaspartate alpha-methyl ester + S-adenosyl-L-homocysteine. In terms of biological role, catalyzes the methyl esterification of L-isoaspartyl residues in peptides and proteins that result from spontaneous decomposition of normal L-aspartyl and L-asparaginyl residues. It plays a role in the repair and/or degradation of damaged proteins. This is Protein-L-isoaspartate O-methyltransferase (pcm) from Pyrococcus furiosus (strain ATCC 43587 / DSM 3638 / JCM 8422 / Vc1).